Here is a 655-residue protein sequence, read N- to C-terminus: Tumor necrosis factor receptor superfamily member 21 (655 aa).

The first 41 residues, 1–41 (MGTRASSITALASCSRTAGQVGATMVAGSLLLLGFLSTITA), serve as a signal peptide directing secretion. Over 42–349 (QPEQKTLSLP…AHKHFDINEH (308 aa)) the chain is Extracellular. 4 TNFR-Cys repeats span residues 50 to 88 (LPGT…LRVC), 90 to 131 (SCPA…DREC), 133 to 167 (CPPG…EDVR), and 170 to 211 (QCAR…DNVC). 9 disulfide bridges follow: Cys67–Cys80, Cys70–Cys88, Cys91–Cys106, Cys109–Cys123, Cys113–Cys131, Cys133–Cys144, Cys150–Cys168, Cys171–Cys186, and Cys192–Cys211. Asn82 carries an N-linked (GlcNAc...) asparagine glycan. N-linked (GlcNAc...) asparagine glycosylation is present at Asn141. 2 disordered regions span residues 222 to 305 (PPSS…QAPH) and 318 to 339 (EATG…PRQN). Polar residues-rich tracts occupy residues 241 to 262 (VPSS…TASV) and 276 to 302 (PDNT…THQQ). Asn252, Asn257, Asn278, and Asn289 each carry an N-linked (GlcNAc...) asparagine glycan. The span at 330–339 (APKRGHPRQN) shows a compositional bias: basic residues. A helical membrane pass occupies residues 350-370 (LPWMIVLFLLLVLVLIVVCSI). Residue Cys368 is the site of S-palmitoyl cysteine attachment. The Cytoplasmic portion of the chain corresponds to 371-655 (RKSSRTLKKG…SVYSHLPDLL (285 aa)). The Death domain maps to 415-498 (GIDILKLVAA…DVVEKIRGLM (84 aa)).

In terms of assembly, associates with TRADD. Interacts with NGFR. Interacts with CASP8. Oxidized in response to reactive oxygen species (ROS), leading to endocytosis. As to expression, detected in spleen B-cells (at protein level). Ubiquitous. Highly expressed in adult spleen, thymus, testis, prostate, ovary, small intestine, colon, brain, lung and kidney, and in fetal brain, liver and lung. Detected at lower levels in adult peripheral blood leukocytes, lung, and in fetal muscle, heart, kidney, small intestine and skin. Detected in T-cells, B-cells and monocytes. In T-cells expression is highest in Th0 cells, intermediate in Th2 cells and lower in Th1 cells. Expressed at low levels in proliferating progenitors in the spinal cord, but is highly expressed by differentiating neurons within the spinal cord and adjacent dorsal root ganglia.

It localises to the cell membrane. Promotes apoptosis, possibly via a pathway that involves the activation of NF-kappa-B. Can also promote apoptosis mediated by BAX and by the release of cytochrome c from the mitochondria into the cytoplasm. Trophic-factor deprivation triggers the cleavage of surface APP by beta-secretase to release sAPP-beta which is further cleaved to release an N-terminal fragment of APP (N-APP). Negatively regulates oligodendrocyte survival, maturation and myelination. Plays a role in signaling cascades triggered by stimulation of T-cell receptors, in the adaptive immune response and in the regulation of T-cell differentiation and proliferation. Negatively regulates T-cell responses and the release of cytokines such as IL4, IL5, IL10, IL13 and IFNG by Th2 cells. Negatively regulates the production of IgG, IgM and IgM in response to antigens. May inhibit the activation of JNK in response to T-cell stimulation. Also acts as a regulator of pyroptosis: recruits CASP8 in response to reactive oxygen species (ROS) and subsequent oxidation, leading to activation of GSDMC. This is Tumor necrosis factor receptor superfamily member 21 (Tnfrsf21) from Mus musculus (Mouse).